Consider the following 427-residue polypeptide: ATP-sensitive inward rectifier potassium channel 12 (427 aa).

Topologically, residues 1–77 are cytoplasmic; it reads MTAASRANPY…LADMFTTCVD (77 aa). C75 is modified (S-nitrosocysteine). Residues 78–104 traverse the membrane as a helical segment; the sequence is IRWRYMLLIFSLAFLASWLLFGIIFWV. Positions 79 and 81 each coordinate a 1,2-diacyl-sn-glycero-3-phospho-(1D-myo-inositol-4,5-bisphosphate). The Extracellular portion of the chain corresponds to 105 to 129; the sequence is IAVAHGDLEPAEGRGRTPCVLQVHG. The cysteines at positions 123 and 155 are disulfide-linked. An intramembrane region (helical; Pore-forming) is located at residues 130–146; that stretch reads FMAAFLFSIETQTTIGY. Residues T143, I144, G145, and Y146 each coordinate K(+). Residues 143 to 148 carry the Selectivity filter motif; sequence TIGYGL. At 147–155 the chain is on the extracellular side; sequence GLRCVTEEC. The chain crosses the membrane as a helical span at residues 156-183; the sequence is PVAVFMVVAQSIVGCIIDSFMIGAIMAK. 2 residues coordinate a 1,2-diacyl-sn-glycero-3-phospho-(1D-myo-inositol-4,5-bisphosphate): K183 and K188. Topologically, residues 184–427 are cytoplasmic; that stretch reads MARPKKRAQT…ERPYRRESEI (244 aa). The tract at residues 387-427 is disordered; that stretch reads DEEDEVATDRDGRSPQPEHDFDRLQASSAALERPYRRESEI. Residues 393-409 are compositionally biased toward basic and acidic residues; sequence ATDRDGRSPQPEHDFDR. The short motif at 425 to 427 is the PDZ-binding element; the sequence is SEI.

It belongs to the inward rectifier-type potassium channel (TC 1.A.2.1) family. KCNJ12 subfamily. In terms of assembly, homotetramer. Forms heteromer with KCNJ4. Can form heteromeric channels with Kir2.6/KCNJ18. Association, via its PDZ-recognition domain, with LIN7A, LIN7B, LIN7C, DLG1, CASK and APBA1 plays a key role in its localization and trafficking. Highest level in cerebellum.

The protein localises to the membrane. It is found in the cell membrane. The protein resides in the sarcolemma. Its subcellular location is the T-tubule. It catalyses the reaction K(+)(in) = K(+)(out). With respect to regulation, activated by phosphatidylinositol 4,5-biphosphate (PtdIns(4,5)P2). PtdIns(4,5)P2 binding to the cytoplasmic side of the channel triggers a conformation change leading to channel opening. Inhibited by Ba(2+). Its function is as follows. Inward rectifying potassium channel that probably participates in controlling the resting membrane potential in electrically excitable cells. It probably participates in establishing action potential waveform and excitability of neuronal and muscle tissues. Inward rectifier potassium channels are characterized by a greater tendency to allow potassium to flow into the cell rather than out of it. Their voltage dependence is regulated by the concentration of extracellular potassium; as external potassium is raised, the voltage range of the channel opening shifts to more positive voltages. The inward rectification is mainly due to the blockage of outward current by internal magnesium. This chain is ATP-sensitive inward rectifier potassium channel 12 (Kcnj12), found in Mus musculus (Mouse).